The sequence spans 738 residues: 1,4-alpha-glucan branching enzyme GlgB (738 aa).

Aspartate 399 functions as the Nucleophile in the catalytic mechanism. Glutamate 452 serves as the catalytic Proton donor.

The protein belongs to the glycosyl hydrolase 13 family. GlgB subfamily. In terms of assembly, monomer.

It carries out the reaction Transfers a segment of a (1-&gt;4)-alpha-D-glucan chain to a primary hydroxy group in a similar glucan chain.. The protein operates within glycan biosynthesis; glycogen biosynthesis. Functionally, catalyzes the formation of the alpha-1,6-glucosidic linkages in glycogen by scission of a 1,4-alpha-linked oligosaccharide from growing alpha-1,4-glucan chains and the subsequent attachment of the oligosaccharide to the alpha-1,6 position. In Chlamydia trachomatis serovar D (strain ATCC VR-885 / DSM 19411 / UW-3/Cx), this protein is 1,4-alpha-glucan branching enzyme GlgB.